A 772-amino-acid polypeptide reads, in one-letter code: PDZ domain-containing protein 4 (772 aa).

Positions 136 to 221 (EVELCKNSHQ…NISLLVARPE (86 aa)) constitute a PDZ domain. The disordered stretch occupies residues 239 to 320 (DFGSENEGDL…TNTPGSLRKF (82 aa)). Residue Ser242 is modified to Phosphoserine. The segment covering 287 to 303 (RTDESTRNEESSEHDLL) has biased composition (basic and acidic residues). Residues 394–424 (VNRNESLGHEMAMLEEELRHLEFKCRNILRA) adopt a coiled-coil conformation. Residues 450–573 (ASEPKKHELS…VGPEGSPYLS (124 aa)) form a disordered region. The segment covering 452-472 (EPKKHELSDISELPEKSDKDS) has biased composition (basic and acidic residues). A Phosphoserine modification is found at Ser459. Composition is skewed to polar residues over residues 473-484 (TSAYNTGESCRS) and 502-511 (AGNSNLNRTP). The segment covering 535-552 (LSRDPEVGRRQHTEERVR) has biased composition (basic and acidic residues).

The protein localises to the cytoplasm. It is found in the cell cortex. This is PDZ domain-containing protein 4 (Pdzd4) from Mus musculus (Mouse).